The primary structure comprises 211 residues: Ribosomal RNA small subunit methyltransferase G (211 aa).

S-adenosyl-L-methionine contacts are provided by residues Gly76, Leu81, 127 to 128 (VE), and Arg142.

Belongs to the methyltransferase superfamily. RNA methyltransferase RsmG family.

The protein resides in the cytoplasm. The enzyme catalyses guanosine(527) in 16S rRNA + S-adenosyl-L-methionine = N(7)-methylguanosine(527) in 16S rRNA + S-adenosyl-L-homocysteine. Its function is as follows. Specifically methylates the N7 position of guanine in position 527 of 16S rRNA. This is Ribosomal RNA small subunit methyltransferase G from Vibrio campbellii (strain ATCC BAA-1116).